Here is a 1077-residue protein sequence, read N- to C-terminus: Teashirt homolog 1-B (1077 aa).

Disordered regions lie at residues 1 to 110 (MPRR…NASY) and 142 to 179 (NEKA…SCTN). Acidic residues predominate over residues 26–36 (TEEDNLEDDGL). The segment covering 56–69 (TQSYQNSPISSATN) has biased composition (polar residues). Positions 160–179 (SGPTSDPGTPTTITSSSCTN) are enriched in low complexity. A C2H2-type 1 zinc finger spans residues 248-272 (FRCKDCSAAYDTLVELTVHMNETGH). Over residues 274–286 (RDDNRDREAERTK) the composition is skewed to basic and acidic residues. The interval 274 to 300 (RDDNRDREAERTKRWSKPRKRSLMEME) is disordered. A C2H2-type 2 zinc finger spans residues 309–333 (LKCMYCGHSFESLQDLSVHMIKTKH). Residues 362 to 394 (ALPDSPEQAGISPGASVSESAKDPKAANPYVTP) form a disordered region. A C2H2-type 3 zinc finger spans residues 418-442 (LKCMECGSSHDTLQQLTAHMMVTGH). 2 disordered regions span residues 473-530 (PPTT…KIEP) and 849-873 (GRLT…SSFE). Over residues 497–529 (HSEEKKDPEKEKVNIGEVEKKIKEENEDPEKIE) the composition is skewed to basic and acidic residues. Polar residues predominate over residues 853–862 (PKSSTPSTVS). The homeobox DNA-binding region spans 885-955 (RKGRQSNWNP…NVKYQLRRTG (71 aa)). 2 C2H2-type zinc fingers span residues 970 to 992 (FFCN…LETH) and 1037 to 1060 (FQCK…SKTH).

It belongs to the teashirt C2H2-type zinc-finger protein family.

The protein localises to the nucleus. Its function is as follows. Probable transcriptional regulator involved in developmental processes. May act as a transcriptional repressor (Potential). Involved in two major neuronal regionalization processes: primary anteroposterior (AP) axis patterning of the CNS and segmentation of the cranial neuronal crest (CNS) development. In Xenopus laevis (African clawed frog), this protein is Teashirt homolog 1-B (tshz1-b).